Here is a 275-residue protein sequence, read N- to C-terminus: NH(3)-dependent NAD(+) synthetase (275 aa).

47–54 (GISGGQDS) provides a ligand contact to ATP. A Mg(2+)-binding site is contributed by Asp53. Arg141 serves as a coordination point for deamido-NAD(+). ATP is bound at residue Thr161. Glu166 contacts Mg(2+). Deamido-NAD(+)-binding residues include Lys174 and Asp181. Positions 190 and 212 each coordinate ATP. Position 261–262 (261–262 (HK)) interacts with deamido-NAD(+).

This sequence belongs to the NAD synthetase family. In terms of assembly, homodimer.

The enzyme catalyses deamido-NAD(+) + NH4(+) + ATP = AMP + diphosphate + NAD(+) + H(+). It functions in the pathway cofactor biosynthesis; NAD(+) biosynthesis; NAD(+) from deamido-NAD(+) (ammonia route): step 1/1. Its function is as follows. Catalyzes the ATP-dependent amidation of deamido-NAD to form NAD. Uses ammonia as a nitrogen source. This is NH(3)-dependent NAD(+) synthetase from Lacticaseibacillus casei (strain BL23) (Lactobacillus casei).